The chain runs to 440 residues: Chromosomal replication initiator protein DnaA (440 aa).

The segment at 1 to 69 (MKERILQEIK…VKVVLGNDAT (69 aa)) is domain I, interacts with DnaA modulators. The interval 69–96 (TFEITYEAFEPHSSYSEPLVKKRAVLLT) is domain II. The interval 97–313 (PLNPDYTFEN…GAIIKLLVYK (217 aa)) is domain III, AAA+ region. V108, N113, G140, L141, G142, K143, T144, H145, and R300 together coordinate ADP. G140 is a binding site for ATP. ATP contacts are provided by G142, K143, and T144. T144 contacts Mg(2+). The segment at 314-440 (ETTGKEVDLK…GEISRRALSG (127 aa)) is domain IV, binds dsDNA.

It belongs to the DnaA family. As to quaternary structure, oligomerizes as a right-handed, spiral filament on DNA at oriC.

It is found in the cytoplasm. Functionally, plays an essential role in the initiation and regulation of chromosomal replication. ATP-DnaA binds to the origin of replication (oriC) to initiate formation of the DNA replication initiation complex once per cell cycle. Binds the DnaA box (a 9 base pair repeat at the origin) and separates the double-stranded (ds)DNA. Forms a right-handed helical filament on oriC DNA; dsDNA binds to the exterior of the filament while single-stranded (ss)DNA is stabiized in the filament's interior. The ATP-DnaA-oriC complex binds and stabilizes one strand of the AT-rich DNA unwinding element (DUE), permitting loading of DNA polymerase. After initiation quickly degrades to an ADP-DnaA complex that is not apt for DNA replication. Binds acidic phospholipids. In terms of biological role, the DnaA box consensus is 5'-[ATC][AT]AC[CT]TACCA[CT][CTA]-3' in this bacterium. Mutagenesis of residues that line the central pore blocks dsDNA separation. This is Chromosomal replication initiator protein DnaA from Thermotoga maritima (strain ATCC 43589 / DSM 3109 / JCM 10099 / NBRC 100826 / MSB8).